The sequence spans 93 residues: MSSGGLLLLLGLLTLWAELTPVSTRDRPKFCYLPADPGRCLAYMPSFYYDSASNKCKKFIYGGCRGNANNFKTWDECRHTCVASGIQPRIASN.

Residues 1–24 form the signal peptide; the sequence is MSSGGLLLLLGLLTLWAELTPVST. In terms of domain architecture, BPTI/Kunitz inhibitor spans 31–81; the sequence is CYLPADPGRCLAYMPSFYYDSASNKCKKFIYGGCRGNANNFKTWDECRHTC. Disulfide bonds link Cys31/Cys81, Cys40/Cys64, and Cys56/Cys77. Residues 90 to 93 constitute a propeptide that is removed on maturation; sequence IASN.

It belongs to the venom Kunitz-type family. Expressed by the venom gland.

It is found in the secreted. In terms of biological role, serine protease inhibitor that principally inhibits alpha-chymotrypsin (Ki=4.3 nM). Shows weak inhibition on trypsin (Ki=5100 nM), and plasma kallikrein. The sequence is that of Kunitz-type serine protease inhibitor 3 from Vipera ammodytes ammodytes (Western sand viper).